The chain runs to 53 residues: UPF0391 membrane protein KPK_4780 (53 aa).

2 helical membrane-spanning segments follow: residues 4 to 24 (WGII…GGLA) and 30 to 47 (AAKI…VSLF).

This sequence belongs to the UPF0391 family.

It localises to the cell membrane. The protein is UPF0391 membrane protein KPK_4780 of Klebsiella pneumoniae (strain 342).